We begin with the raw amino-acid sequence, 66 residues long: Heat-stable enterotoxin (66 aa).

The first 19 residues, 1–19 (MKKIVFVLVLMLSSFGTFG), serve as a signal peptide directing secretion. The propeptide occupies 20 to 50 (QETASRQFGDAFSTPIAAEVNKKACDTELPP). 3 disulfide bridges follow: cysteine 54-cysteine 59, cysteine 55-cysteine 63, and cysteine 58-cysteine 66.

The protein belongs to the heat-stable enterotoxin family.

It localises to the secreted. Toxin which activates the particulate form of guanylate cyclase and increases cyclic GMP levels within the host intestinal epithelial cells. In Yersinia kristensenii, this protein is Heat-stable enterotoxin (yst).